Consider the following 1123-residue polypeptide: Phytochrome A (1123 aa).

Positions 1 to 14 are enriched in low complexity; sequence MSSSRPSQSSTTSS. The interval 1 to 20 is disordered; sequence MSSSRPSQSSTTSSRSKHSA. One can recognise a GAF domain in the interval 218-401; sequence SMERLCDTMV…VFAILVNKEL (184 aa). Cysteine 323 is a binding site for phytochromobilin. The 71-residue stretch at 617-687 folds into the PAS 1 domain; that stretch reads VTAEMVRLIE…KMLELALQGQ (71 aa). Residues 690-746 enclose the PAC domain; sequence RNVEFEIKTHGPSRDSSPISLIVNACASKDVRDSVVGVCFIAQDITGQKSIMDKFTR. One can recognise a PAS 2 domain in the interval 747–821; sequence IEGDYRAIIQ…KNQEAFVNFG (75 aa). In terms of domain architecture, Histidine kinase spans 901-1118; it reads YIRRQIRNPL…TFIISVELAV (218 aa).

The protein belongs to the phytochrome family. Homodimer. Post-translationally, contains one covalently linked phytochromobilin chromophore.

Functionally, regulatory photoreceptor which exists in two forms that are reversibly interconvertible by light: the Pr form that absorbs maximally in the red region of the spectrum and the Pfr form that absorbs maximally in the far-red region. Photoconversion of Pr to Pfr induces an array of morphogenic responses, whereas reconversion of Pfr to Pr cancels the induction of those responses. Pfr controls the expression of a number of nuclear genes including those encoding the small subunit of ribulose-bisphosphate carboxylase, chlorophyll A/B binding protein, protochlorophyllide reductase, rRNA, etc. It also controls the expression of its own gene(s) in a negative feedback fashion. The protein is Phytochrome A (PHYA) of Solanum tuberosum (Potato).